A 569-amino-acid polypeptide reads, in one-letter code: 2-succinyl-5-enolpyruvyl-6-hydroxy-3-cyclohexene-1-carboxylate synthase (569 aa).

Belongs to the TPP enzyme family. MenD subfamily. Homodimer. Requires Mg(2+) as cofactor. Mn(2+) serves as cofactor. It depends on thiamine diphosphate as a cofactor.

It catalyses the reaction isochorismate + 2-oxoglutarate + H(+) = 5-enolpyruvoyl-6-hydroxy-2-succinyl-cyclohex-3-ene-1-carboxylate + CO2. Its pathway is quinol/quinone metabolism; 1,4-dihydroxy-2-naphthoate biosynthesis; 1,4-dihydroxy-2-naphthoate from chorismate: step 2/7. The protein operates within quinol/quinone metabolism; menaquinone biosynthesis. Catalyzes the thiamine diphosphate-dependent decarboxylation of 2-oxoglutarate and the subsequent addition of the resulting succinic semialdehyde-thiamine pyrophosphate anion to isochorismate to yield 2-succinyl-5-enolpyruvyl-6-hydroxy-3-cyclohexene-1-carboxylate (SEPHCHC). This Haemophilus ducreyi (strain 35000HP / ATCC 700724) protein is 2-succinyl-5-enolpyruvyl-6-hydroxy-3-cyclohexene-1-carboxylate synthase.